The sequence spans 715 residues: uncharacterized protein (715 aa).

This is an uncharacterized protein from Mycobacterium tuberculosis (strain CDC 1551 / Oshkosh).